A 567-amino-acid chain; its full sequence is Amino-acid acetyltransferase, mitochondrial (567 aa).

In terms of domain architecture, N-acetyltransferase spans 392-558 (KDSPQTNPLH…ARLKEYAKHI (167 aa)).

It belongs to the acetyltransferase family.

It is found in the mitochondrion. It catalyses the reaction L-glutamate + acetyl-CoA = N-acetyl-L-glutamate + CoA + H(+). Its pathway is amino-acid biosynthesis; L-arginine biosynthesis; N(2)-acetyl-L-ornithine from L-glutamate: step 1/4. Functionally, N-acetylglutamate synthase involved in arginine biosynthesis. This Vanderwaltozyma polyspora (strain ATCC 22028 / DSM 70294 / BCRC 21397 / CBS 2163 / NBRC 10782 / NRRL Y-8283 / UCD 57-17) (Kluyveromyces polysporus) protein is Amino-acid acetyltransferase, mitochondrial (ARG2).